We begin with the raw amino-acid sequence, 562 residues long: Phosphoglucomutase-1 (562 aa).

Met1 carries the post-translational modification N-acetylmethionine. Lys16 carries the N6-acetyllysine modification. Alpha-D-glucose 1,6-bisphosphate is bound at residue Arg23. Thr115 is subject to Phosphothreonine. Ser117 serves as a coordination point for alpha-D-glucose 1,6-bisphosphate. Ser117 (phosphoserine intermediate) is an active-site residue. Ser117 is a Mg(2+) binding site. Ser117 and Ser134 each carry phosphoserine. Position 185 is a phosphothreonine (Thr185). Ser213 carries the post-translational modification Phosphoserine. The Mg(2+) site is built by Asp288, Asp290, and Asp292. 2 residues coordinate alpha-D-glucose 1,6-bisphosphate: Asp292 and Arg293. Lys349 is modified (N6-acetyllysine). Phosphotyrosine is present on Tyr353. Thr357 is an alpha-D-glucose 1,6-bisphosphate binding site. Ser369 carries the post-translational modification Phosphoserine. Alpha-D-glucose 1,6-bisphosphate-binding residues include Glu376, Ser378, and Lys389. Position 378 is a phosphoserine (Ser378). The residue at position 419 (Lys419) is an N6-succinyllysine. Phosphothreonine; by PAK1 is present on Thr467. Ser477, Ser485, and Ser505 each carry phosphoserine. A Phosphothreonine modification is found at Thr507. Residues Ser509 and Ser541 each carry the phosphoserine modification.

It belongs to the phosphohexose mutase family. As to quaternary structure, monomer. Mg(2+) serves as cofactor. In terms of processing, phosphorylation at Thr-467 by PAK1 significantly enhances enzymatic activity.

It is found in the cytoplasm. It carries out the reaction alpha-D-glucose 1-phosphate = alpha-D-glucose 6-phosphate. It catalyses the reaction O-phospho-L-seryl-[protein] + alpha-D-glucose 1-phosphate = alpha-D-glucose 1,6-bisphosphate + L-seryl-[protein]. The enzyme catalyses alpha-D-glucose 1,6-bisphosphate + L-seryl-[protein] = O-phospho-L-seryl-[protein] + alpha-D-glucose 6-phosphate. Catalyzes the reversible isomerization of alpha-D-glucose 1-phosphate to alpha-D-glucose 6-phosphate. The mechanism proceeds via the intermediate compound alpha-D-glucose 1,6-bisphosphate. This enzyme participates in both the breakdown and synthesis of glucose. The chain is Phosphoglucomutase-1 (PGM1) from Bos taurus (Bovine).